A 297-amino-acid polypeptide reads, in one-letter code: 4-hydroxy-tetrahydrodipicolinate synthase (297 aa).

A pyruvate-binding site is contributed by T47. The active-site Proton donor/acceptor is the Y135. Residue K163 is the Schiff-base intermediate with substrate of the active site. Position 205 (I205) interacts with pyruvate.

It belongs to the DapA family. Homotetramer; dimer of dimers.

The protein localises to the cytoplasm. The enzyme catalyses L-aspartate 4-semialdehyde + pyruvate = (2S,4S)-4-hydroxy-2,3,4,5-tetrahydrodipicolinate + H2O + H(+). The protein operates within amino-acid biosynthesis; L-lysine biosynthesis via DAP pathway; (S)-tetrahydrodipicolinate from L-aspartate: step 3/4. In terms of biological role, catalyzes the condensation of (S)-aspartate-beta-semialdehyde [(S)-ASA] and pyruvate to 4-hydroxy-tetrahydrodipicolinate (HTPA). This chain is 4-hydroxy-tetrahydrodipicolinate synthase, found in Cytophaga hutchinsonii (strain ATCC 33406 / DSM 1761 / CIP 103989 / NBRC 15051 / NCIMB 9469 / D465).